The chain runs to 484 residues: N-succinylglutamate 5-semialdehyde dehydrogenase (484 aa).

221-226 (GSAAAG) lines the NAD(+) pocket. Catalysis depends on residues Glu-244 and Cys-278.

This sequence belongs to the aldehyde dehydrogenase family. AstD subfamily.

It catalyses the reaction N-succinyl-L-glutamate 5-semialdehyde + NAD(+) + H2O = N-succinyl-L-glutamate + NADH + 2 H(+). The protein operates within amino-acid degradation; L-arginine degradation via AST pathway; L-glutamate and succinate from L-arginine: step 4/5. Its function is as follows. Catalyzes the NAD-dependent reduction of succinylglutamate semialdehyde into succinylglutamate. This is N-succinylglutamate 5-semialdehyde dehydrogenase from Caulobacter sp. (strain K31).